Here is a 173-residue protein sequence, read N- to C-terminus: Putative metal-dependent hydrolase OB0413 (173 aa).

Zn(2+)-binding residues include His64, His155, and His159.

Belongs to the metal hydrolase YfiT family. As to quaternary structure, homodimer. It depends on Zn(2+) as a cofactor.

The protein resides in the cytoplasm. In terms of biological role, possible metal-dependent hydrolase. The chain is Putative metal-dependent hydrolase OB0413 from Oceanobacillus iheyensis (strain DSM 14371 / CIP 107618 / JCM 11309 / KCTC 3954 / HTE831).